A 171-amino-acid chain; its full sequence is 3-hydroxydecanoyl-[acyl-carrier-protein] dehydratase (171 aa).

Histidine 70 is a catalytic residue.

This sequence belongs to the thioester dehydratase family. FabA subfamily. In terms of assembly, homodimer.

It is found in the cytoplasm. The catalysed reaction is a (3R)-hydroxyacyl-[ACP] = a (2E)-enoyl-[ACP] + H2O. The enzyme catalyses (3R)-hydroxydecanoyl-[ACP] = (2E)-decenoyl-[ACP] + H2O. It carries out the reaction (2E)-decenoyl-[ACP] = (3Z)-decenoyl-[ACP]. Its pathway is lipid metabolism; fatty acid biosynthesis. In terms of biological role, necessary for the introduction of cis unsaturation into fatty acids. Catalyzes the dehydration of (3R)-3-hydroxydecanoyl-ACP to E-(2)-decenoyl-ACP and then its isomerization to Z-(3)-decenoyl-ACP. Can catalyze the dehydratase reaction for beta-hydroxyacyl-ACPs with saturated chain lengths up to 16:0, being most active on intermediate chain length. This is 3-hydroxydecanoyl-[acyl-carrier-protein] dehydratase from Pseudomonas fluorescens (strain SBW25).